The primary structure comprises 372 residues: Glutamine synthetase (372 aa).

Residues 26-105 (IIAEYVWIDS…VLAECWNNDG (80 aa)) enclose the GS beta-grasp domain. Residues 112-372 (HRHEAAKLFE…MTKEYERESL (261 aa)) enclose the GS catalytic domain.

Belongs to the glutamine synthetase family. Homooctamer.

The protein localises to the cytoplasm. It carries out the reaction L-glutamate + NH4(+) + ATP = L-glutamine + ADP + phosphate + H(+). This Kluyveromyces lactis (strain ATCC 8585 / CBS 2359 / DSM 70799 / NBRC 1267 / NRRL Y-1140 / WM37) (Yeast) protein is Glutamine synthetase (GLN1).